A 337-amino-acid chain; its full sequence is Structural protein VP9 (337 aa).

The protein localises to the virion. The protein resides in the host cytoplasm. In Colorado tick fever virus (strain USA/Florio N-7180) (CTFV), this protein is Structural protein VP9.